The primary structure comprises 402 residues: Imidazolonepropionase (402 aa).

2 residues coordinate Fe(3+): His-66 and His-68. 2 residues coordinate Zn(2+): His-66 and His-68. 4-imidazolone-5-propanoate-binding residues include Arg-75, Tyr-138, and His-171. An N-formimidoyl-L-glutamate-binding site is contributed by Tyr-138. Position 236 (His-236) interacts with Fe(3+). Zn(2+) is bound at residue His-236. Position 239 (Gln-239) interacts with 4-imidazolone-5-propanoate. Asp-311 lines the Fe(3+) pocket. Position 311 (Asp-311) interacts with Zn(2+). Asn-313 and Gly-315 together coordinate N-formimidoyl-L-glutamate. Thr-316 is a binding site for 4-imidazolone-5-propanoate.

It belongs to the metallo-dependent hydrolases superfamily. HutI family. Zn(2+) serves as cofactor. It depends on Fe(3+) as a cofactor.

It localises to the cytoplasm. The catalysed reaction is 4-imidazolone-5-propanoate + H2O = N-formimidoyl-L-glutamate. It functions in the pathway amino-acid degradation; L-histidine degradation into L-glutamate; N-formimidoyl-L-glutamate from L-histidine: step 3/3. Its function is as follows. Catalyzes the hydrolytic cleavage of the carbon-nitrogen bond in imidazolone-5-propanoate to yield N-formimidoyl-L-glutamate. It is the third step in the universal histidine degradation pathway. This chain is Imidazolonepropionase, found in Pseudomonas aeruginosa (strain ATCC 15692 / DSM 22644 / CIP 104116 / JCM 14847 / LMG 12228 / 1C / PRS 101 / PAO1).